Reading from the N-terminus, the 800-residue chain is DNA topoisomerase 4 subunit A (800 aa).

In terms of domain architecture, Topo IIA-type catalytic spans 31–495 (LPDVRDGLKP…EIEEIKIDKE (465 aa)). Tyr119 acts as the O-(5'-phospho-DNA)-tyrosine intermediate in catalysis.

It belongs to the type II topoisomerase GyrA/ParC subunit family. ParC type 2 subfamily. As to quaternary structure, heterotetramer composed of ParC and ParE.

The protein localises to the cell membrane. The catalysed reaction is ATP-dependent breakage, passage and rejoining of double-stranded DNA.. Its function is as follows. Topoisomerase IV is essential for chromosome segregation. It relaxes supercoiled DNA. Performs the decatenation events required during the replication of a circular DNA molecule. This Staphylococcus aureus (strain MW2) protein is DNA topoisomerase 4 subunit A.